Consider the following 296-residue polypeptide: Urease accessory protein UreD (296 aa).

The protein belongs to the UreD family. As to quaternary structure, ureD, UreF and UreG form a complex that acts as a GTP-hydrolysis-dependent molecular chaperone, activating the urease apoprotein by helping to assemble the nickel containing metallocenter of UreC. The UreE protein probably delivers the nickel.

Its subcellular location is the cytoplasm. In terms of biological role, required for maturation of urease via the functional incorporation of the urease nickel metallocenter. The protein is Urease accessory protein UreD of Nitrosococcus oceani (strain ATCC 19707 / BCRC 17464 / JCM 30415 / NCIMB 11848 / C-107).